Here is a 175-residue protein sequence, read N- to C-terminus: Putative FAS1 domain-containing protein 081L (175 aa).

The FAS1 domain occupies 28 to 172; the sequence is GPIVPSVWTI…GLVHIVDQFP (145 aa).

The polypeptide is Putative FAS1 domain-containing protein 081L (Invertebrate iridescent virus 3 (IIV-3)).